Reading from the N-terminus, the 575-residue chain is Interleukin-1 receptor-like 2 (575 aa).

The first 19 residues, 1 to 19 (MWSLLLCGLSIALPLSVTA), serve as a signal peptide directing secretion. Ig-like C2-type domains follow at residues 20 to 111 (DGCK…VNLT), 126 to 211 (PNLS…VLNG), and 222 to 318 (YGGS…MCHA). Residues 20 to 335 (DGCKDIFMKN…ILQLPAPDFR (316 aa)) are Extracellular-facing. 9 N-linked (GlcNAc...) asparagine glycosylation sites follow: Asn-41, Asn-59, Asn-109, Asn-127, Asn-184, Asn-234, Asn-250, Asn-266, and Asn-299. Residues Cys-42 and Cys-95 are joined by a disulfide bond. A disulfide bridge connects residues Cys-146 and Cys-195. An intrachain disulfide couples Cys-249 to Cys-316. A helical transmembrane segment spans residues 336–356 (AYLIGGLIALVAVAVSVVYIY). Over 357-575 (NIFKIDIVLW…RRKKCTLTTG (219 aa)) the chain is Cytoplasmic. In terms of domain architecture, TIR spans 381–536 (KLYDAYVLYP…KFWKTVRYHM (156 aa)). Residue Glu-467 is part of the active site.

It belongs to the interleukin-1 receptor family. As to quaternary structure, interacts with IL1RAP; the association is enhanced by IL36B indicative for an functional signaling complex and inhibited by IL36RN. In terms of tissue distribution, expressed in synovial fibroblasts and articular chondrocytes. Expressed in keratinocytes and monocyte-derived dendritic cells. Expressed in monocytes and myeloid dendritic cells; at protein level.

It localises to the membrane. It carries out the reaction NAD(+) + H2O = ADP-D-ribose + nicotinamide + H(+). Its function is as follows. Receptor for interleukin-36 (IL36A, IL36B and IL36G). After binding to interleukin-36 associates with the coreceptor IL1RAP to form the interleukin-36 receptor complex which mediates interleukin-36-dependent activation of NF-kappa-B, MAPK and other pathways. The IL-36 signaling system is thought to be present in epithelial barriers and to take part in local inflammatory response; it is similar to the IL-1 system. Seems to be involved in skin inflammatory response by induction of the IL-23/IL-17/IL-22 pathway. This is Interleukin-1 receptor-like 2 (IL1RL2) from Homo sapiens (Human).